The chain runs to 354 residues: Thiamine thiazole synthase (354 aa).

Substrate contacts are provided by residues Ala-83, 104–105 (EA), Gly-112, and Val-177. Cys-210 carries the 2,3-didehydroalanine (Cys) modification. Residues Asp-212, His-227, Met-305, and 315–317 (RMG) each bind substrate.

It belongs to the THI4 family. As to quaternary structure, homooctamer. The cofactor is Fe cation. During the catalytic reaction, a sulfide is transferred from Cys-210 to a reaction intermediate, generating a dehydroalanine residue.

The protein resides in the cytoplasm. It localises to the nucleus. The catalysed reaction is [ADP-thiazole synthase]-L-cysteine + glycine + NAD(+) = [ADP-thiazole synthase]-dehydroalanine + ADP-5-ethyl-4-methylthiazole-2-carboxylate + nicotinamide + 3 H2O + 2 H(+). In terms of biological role, involved in biosynthesis of the thiamine precursor thiazole. Catalyzes the conversion of NAD and glycine to adenosine diphosphate 5-(2-hydroxyethyl)-4-methylthiazole-2-carboxylic acid (ADT), an adenylated thiazole intermediate. The reaction includes an iron-dependent sulfide transfer from a conserved cysteine residue of the protein to a thiazole intermediate. The enzyme can only undergo a single turnover, which suggests it is a suicide enzyme. May have additional roles in adaptation to various stress conditions and in DNA damage tolerance. The sequence is that of Thiamine thiazole synthase from Candida albicans (strain SC5314 / ATCC MYA-2876) (Yeast).